A 219-amino-acid polypeptide reads, in one-letter code: Probable nicotinate-nucleotide adenylyltransferase (219 aa).

It belongs to the NadD family.

The catalysed reaction is nicotinate beta-D-ribonucleotide + ATP + H(+) = deamido-NAD(+) + diphosphate. It functions in the pathway cofactor biosynthesis; NAD(+) biosynthesis; deamido-NAD(+) from nicotinate D-ribonucleotide: step 1/1. Functionally, catalyzes the reversible adenylation of nicotinate mononucleotide (NaMN) to nicotinic acid adenine dinucleotide (NaAD). The polypeptide is Probable nicotinate-nucleotide adenylyltransferase (Erythrobacter litoralis (strain HTCC2594)).